The following is a 98-amino-acid chain: NADH-ubiquinone oxidoreductase chain 4L (98 aa).

Transmembrane regions (helical) follow at residues 1–21 (MSLT…GLLM), 29–49 (SLLC…ITIL), and 61–81 (IILL…LVMV).

This sequence belongs to the complex I subunit 4L family. In terms of assembly, core subunit of respiratory chain NADH dehydrogenase (Complex I) which is composed of 45 different subunits.

It is found in the mitochondrion inner membrane. It catalyses the reaction a ubiquinone + NADH + 5 H(+)(in) = a ubiquinol + NAD(+) + 4 H(+)(out). In terms of biological role, core subunit of the mitochondrial membrane respiratory chain NADH dehydrogenase (Complex I) which catalyzes electron transfer from NADH through the respiratory chain, using ubiquinone as an electron acceptor. Part of the enzyme membrane arm which is embedded in the lipid bilayer and involved in proton translocation. In Artibeus jamaicensis (Jamaican fruit-eating bat), this protein is NADH-ubiquinone oxidoreductase chain 4L (MT-ND4L).